We begin with the raw amino-acid sequence, 776 residues long: DNA ligase (776 aa).

Residues 31–35 (DAEYD), 80–81 (SL), and E112 contribute to the NAD(+) site. K114 acts as the N6-AMP-lysine intermediate in catalysis. Positions 135, 172, 288, and 312 each coordinate NAD(+). Zn(2+)-binding residues include C406, C409, C436, and C442. The region spanning 693–776 (AEGLPLAGQT…VFLDEQGIAI (84 aa)) is the BRCT domain.

The protein belongs to the NAD-dependent DNA ligase family. LigA subfamily. It depends on Mg(2+) as a cofactor. Mn(2+) serves as cofactor.

The catalysed reaction is NAD(+) + (deoxyribonucleotide)n-3'-hydroxyl + 5'-phospho-(deoxyribonucleotide)m = (deoxyribonucleotide)n+m + AMP + beta-nicotinamide D-nucleotide.. In terms of biological role, DNA ligase that catalyzes the formation of phosphodiester linkages between 5'-phosphoryl and 3'-hydroxyl groups in double-stranded DNA using NAD as a coenzyme and as the energy source for the reaction. It is essential for DNA replication and repair of damaged DNA. This Pseudomonas putida (strain W619) protein is DNA ligase.